We begin with the raw amino-acid sequence, 1807 residues long: Integrin beta-4 (1807 aa).

The signal sequence occupies residues 1-27 (MAGLCSSPWVKLLLAVVLSAGLPGNMA). The Extracellular portion of the chain corresponds to 28-713 (NRCKKAQVKS…KKKDCLPAPS (686 aa)). One can recognise a PSI domain in the interval 29–73 (RCKKAQVKSCTECIRVDKSCAYCTDELFKERRCNTQADVLAAGCR). Disulfide bonds link Cys-30-Cys-48, Cys-38-Cys-456, Cys-41-Cys-61, Cys-51-Cys-72, Cys-245-Cys-288, Cys-458-Cys-477, Cys-469-Cys-480, and Cys-482-Cys-491. The VWFA domain maps to 131–340 (DLYILMDFSN…SYYEKLHKYF (210 aa)). 2 residues coordinate Mg(2+): Ser-139 and Ser-141. Ca(2+)-binding residues include Ser-141, Asp-144, Asp-145, and Asp-176. The segment at 194–199 (WPNSDP) is involved in NRG1- and IGF1-binding. Ca(2+)-binding residues include Asn-228, Asp-230, Pro-232, and Glu-233. Glu-233 lines the Mg(2+) pocket. An N-linked (GlcNAc...) asparagine glycan is attached at Asn-327. Residue Glu-350 coordinates Ca(2+). I-EGF domains lie at 458 to 492 (CELQ…KTCN), 493 to 538 (CSTG…HFCE), 539 to 575 (YDNF…RSCD), and 576 to 617 (CPLS…TTCE). The N-linked (GlcNAc...) asparagine glycan is linked to Asn-492. Intrachain disulfides connect Cys-493–Cys-521, Cys-504–Cys-519, Cys-513–Cys-524, Cys-526–Cys-537, Cys-544–Cys-558, Cys-552–Cys-563, Cys-565–Cys-574, Cys-576–Cys-599, Cys-583–Cys-597, Cys-591–Cys-602, and Cys-604–Cys-616. Asn-580 is a glycosylation site (N-linked (GlcNAc...) asparagine). Asn-619 carries N-linked (GlcNAc...) asparagine glycosylation. Intrachain disulfides connect Cys-628-Cys-673, Cys-634-Cys-653, Cys-637-Cys-650, and Cys-682-Cys-708. Asn-697 carries an N-linked (GlcNAc...) asparagine glycan. A helical transmembrane segment spans residues 714–734 (WWLIPLLIFLLLLLVLLLLLC). The interval 734 to 751 (CWKYCACCKACLGLLPCC) is palmitoylated on several cysteines. Residues 735–1807 (WKYCACCKAC…THMDQQFFQT (1073 aa)) lie on the Cytoplasmic side of the membrane. 3 positions are modified to phosphoserine: Ser-773, Ser-1071, and Ser-1121. Positions 981–1086 (VNITIIKEQA…QVRRFQVQLS (106 aa)) constitute a Calx-beta domain. The tract at residues 1119–1141 (SASPPLPRGDLGAPQNPNAKAAG) is disordered. Fibronectin type-III domains follow at residues 1131–1220 (APQN…THQE) and 1224–1323 (EPGR…TQPK). Phosphoserine is present on residues Ser-1386, Ser-1389, and Ser-1405. Thr-1418 is subject to Phosphothreonine. Position 1425 is a phosphoserine (Ser-1425). Thr-1514 is modified (phosphothreonine). Fibronectin type-III domains lie at 1514 to 1609 (TPTR…VHPQ) and 1627 to 1723 (APGP…SQDG). Residue Ser-1776 is modified to Phosphoserine.

This sequence belongs to the integrin beta chain family. Heterodimer of an alpha and a beta subunit. Beta-4 associates with alpha-6. Interacts (via cytoplasmic region) with COL17A1 (via cytoplasmic region). Interacts (via cytoplasmic region) with DST isoform 3 (via N-terminus). Interacts (via cytoplasmic domain) with DST (via N-terminus). Interacts with RAC1. ITGA6:ITGB4 is found in a ternary complex with NRG1 and ERBB3. ITGA6:ITGB4 is found in a ternary complex with IGF1 and IGF1R. ITGA6:ITGB4 interacts with IGF2. Interacts with TMEM268; this interaction prevents ITGB4 degradation. Post-translationally, palmitoylated by DHHC3 at several cysteines of the membrane-proximal region, enhancing stability and cell surface expression. Palmitoylation also promotes secondary association with tertaspanins.

It localises to the cell membrane. The protein resides in the cell junction. Its subcellular location is the hemidesmosome. Integrin alpha-6/beta-4 is a receptor for laminin. It plays a critical structural role in the hemidesmosome of epithelial cells. Is required for the regulation of keratinocyte polarity and motility. ITGA6:ITGB4 binds to NRG1 (via EGF domain) and this binding is essential for NRG1-ERBB signaling. ITGA6:ITGB4 binds to IGF1 and this binding is essential for IGF1 signaling. ITGA6:ITGB4 binds to IGF2 and this binding is essential for IGF2 signaling. This is Integrin beta-4 (Itgb4) from Rattus norvegicus (Rat).